Here is a 710-residue protein sequence, read N- to C-terminus: Early transcription factor 82 kDa subunit (710 aa).

Belongs to the poxviridae VETF large subunit family. Heterodimer of a 70 kDa and a 82 kDa subunit. Part of the early transcription complex composed of ETF, RAP94/OPG109, and the DNA-directed RNA polymerase.

Its subcellular location is the virion. Acts with RNA polymerase to initiate transcription from early gene promoters. Is recruited by the RPO-associated protein of 94 kDa RAP94/OPG109 to form the early transcription complex, which also contains the core RNA polymerase. ETF heterodimer binds to early gene promoters. The protein is Early transcription factor 82 kDa subunit (OPG133) of Bos taurus (Bovine).